A 204-amino-acid polypeptide reads, in one-letter code: Tumor necrosis factor receptor superfamily member 26 (204 aa).

The first 19 residues, 1–19 (MTRLRLLLLLGLLLRVAVC), serve as a signal peptide directing secretion. The Extracellular portion of the chain corresponds to 20-164 (SVNTITLCKI…SQCFCFSKPL (145 aa)). 9 cysteine pairs are disulfide-bonded: C27/C38, C39/C52, C42/C61, C64/C79, C82/C95, C85/C103, C105/C120, C123/C135, and C126/C143. TNFR-Cys repeat units lie at residues 27 to 61 (CKIG…KSEC), 63 to 103 (PCDS…DRVC), and 104 to 143 (QCKQ…DTVC). N-linked (GlcNAc...) asparagine glycosylation occurs at N57. N-linked (GlcNAc...) asparagine glycosylation occurs at N136. A helical membrane pass occupies residues 165 to 185 (GIVVIIAAFIIIIGAVIILIL). The Cytoplasmic segment spans residues 186–204 (KIICYCKRGENIQLSSTML).

As to expression, expressed in thymus and spleen. Detectable levels in lung.

It localises to the membrane. The chain is Tumor necrosis factor receptor superfamily member 26 (Tnfrsf26) from Mus musculus (Mouse).